The primary structure comprises 535 residues: CTP synthase (535 aa).

The tract at residues methionine 1–leucine 267 is amidoligase domain. Serine 13 contacts CTP. Serine 13 lines the UTP pocket. Position 14–19 (serine 14–isoleucine 19) interacts with ATP. L-glutamine is bound at residue tyrosine 54. Residue aspartate 71 coordinates ATP. The Mg(2+) site is built by aspartate 71 and glutamate 141. CTP-binding positions include aspartate 148 to glutamate 150, lysine 188 to glutamine 193, and lysine 224. Residues lysine 188–glutamine 193 and lysine 224 contribute to the UTP site. ATP is bound at residue arginine 240 to alanine 242. The region spanning lysine 292–serine 534 is the Glutamine amidotransferase type-1 domain. Glycine 354 lines the L-glutamine pocket. Cysteine 381 functions as the Nucleophile; for glutamine hydrolysis in the catalytic mechanism. Residues leucine 382–glutamine 385, glutamate 405, and arginine 462 contribute to the L-glutamine site. Active-site residues include histidine 507 and glutamate 509.

Belongs to the CTP synthase family. Homotetramer.

It catalyses the reaction UTP + L-glutamine + ATP + H2O = CTP + L-glutamate + ADP + phosphate + 2 H(+). The catalysed reaction is L-glutamine + H2O = L-glutamate + NH4(+). The enzyme catalyses UTP + NH4(+) + ATP = CTP + ADP + phosphate + 2 H(+). Its pathway is pyrimidine metabolism; CTP biosynthesis via de novo pathway; CTP from UDP: step 2/2. Its activity is regulated as follows. Allosterically activated by GTP, when glutamine is the substrate; GTP has no effect on the reaction when ammonia is the substrate. The allosteric effector GTP functions by stabilizing the protein conformation that binds the tetrahedral intermediate(s) formed during glutamine hydrolysis. Inhibited by the product CTP, via allosteric rather than competitive inhibition. In terms of biological role, catalyzes the ATP-dependent amination of UTP to CTP with either L-glutamine or ammonia as the source of nitrogen. Regulates intracellular CTP levels through interactions with the four ribonucleotide triphosphates. This Bacillus thuringiensis subsp. konkukian (strain 97-27) protein is CTP synthase.